The sequence spans 809 residues: Sucrose synthase 2 (809 aa).

The GT-B glycosyltransferase stretch occupies residues 278-756 (MVFNVVILSP…GLQRIYERYT (479 aa)).

The protein belongs to the glycosyltransferase 1 family. Plant sucrose synthase subfamily.

The enzyme catalyses an NDP-alpha-D-glucose + D-fructose = a ribonucleoside 5'-diphosphate + sucrose + H(+). Functionally, sucrose-cleaving enzyme that provides UDP-glucose and fructose for various metabolic pathways. The chain is Sucrose synthase 2 (SUS2) from Pisum sativum (Garden pea).